A 332-amino-acid polypeptide reads, in one-letter code: Putative symporter YfeH (332 aa).

It belongs to the bile acid:sodium symporter (BASS) (TC 2.A.28) family.

The polypeptide is Putative symporter YfeH (yfeH) (Escherichia coli (strain K12)).